Here is a 73-residue protein sequence, read N- to C-terminus: UPF0235 protein SYO3AOP1_0257 (73 aa).

This sequence belongs to the UPF0235 family.

This chain is UPF0235 protein SYO3AOP1_0257, found in Sulfurihydrogenibium sp. (strain YO3AOP1).